The following is a 224-amino-acid chain: Ribosomal RNA small subunit methyltransferase G (224 aa).

Residues glycine 69, leucine 74, 119–120, and arginine 137 each bind S-adenosyl-L-methionine; that span reads AE.

It belongs to the methyltransferase superfamily. RNA methyltransferase RsmG family.

Its subcellular location is the cytoplasm. Specifically methylates the N7 position of guanine in position 518 of 16S rRNA. In Mycobacterium bovis (strain ATCC BAA-935 / AF2122/97), this protein is Ribosomal RNA small subunit methyltransferase G.